The chain runs to 253 residues: uncharacterized protein (253 aa).

It belongs to the MG439/MG440 family.

This is an uncharacterized protein from Mycoplasma pneumoniae (strain ATCC 29342 / M129 / Subtype 1) (Mycoplasmoides pneumoniae).